A 201-amino-acid polypeptide reads, in one-letter code: Small ribosomal subunit protein uS4c (201 aa).

Positions 20 to 44 are disordered; that stretch reads GLTSKRPKAGSDLRNQSRSGKKSQY. In terms of domain architecture, S4 RNA-binding spans 89–152; sequence MRLDNILFRL…NSRTLVQNLL (64 aa).

This sequence belongs to the universal ribosomal protein uS4 family. As to quaternary structure, part of the 30S ribosomal subunit. Contacts protein S5. The interaction surface between S4 and S5 is involved in control of translational fidelity.

It is found in the plastid. The protein resides in the chloroplast. Its function is as follows. One of the primary rRNA binding proteins, it binds directly to 16S rRNA where it nucleates assembly of the body of the 30S subunit. In terms of biological role, with S5 and S12 plays an important role in translational accuracy. This is Small ribosomal subunit protein uS4c (rps4) from Barbarea verna (Land cress).